A 155-amino-acid polypeptide reads, in one-letter code: Small ribosomal subunit protein uS7 (155 aa).

Belongs to the universal ribosomal protein uS7 family. Part of the 30S ribosomal subunit. Contacts proteins S9 and S11.

In terms of biological role, one of the primary rRNA binding proteins, it binds directly to 16S rRNA where it nucleates assembly of the head domain of the 30S subunit. Is located at the subunit interface close to the decoding center, probably blocks exit of the E-site tRNA. This is Small ribosomal subunit protein uS7 from Mycoplasma pneumoniae (strain ATCC 29342 / M129 / Subtype 1) (Mycoplasmoides pneumoniae).